Consider the following 334-residue polypeptide: HTH-type transcriptional repressor PurR (334 aa).

Residues 2-56 (ATIKDVAKMAGVSTTTVSHVINKTRHVADETKQTVLDAIKALNYSPSAVARSLKV) enclose the HTH lacI-type domain. A DNA-binding region (H-T-H motif) is located at residues 4–23 (IKDVAKMAGVSTTTVSHVIN). A DNA-binding region spans residues 48–56 (SAVARSLKV). Hypoxanthine-binding residues include Tyr-73, Lys-189, Thr-191, Phe-220, and Asp-274.

Homodimer.

Its pathway is purine metabolism; purine nucleotide biosynthesis [regulation]. In terms of biological role, is the main repressor of the genes involved in the de novo synthesis of purine nucleotides, regulating purB, purC, purEK, purF, purHD, purL, purMN and guaBA expression. PurR is allosterically activated to bind its cognate DNA by binding the purine corepressors, hypoxanthine or guanine, thereby effecting transcription repression. The sequence is that of HTH-type transcriptional repressor PurR from Mannheimia succiniciproducens (strain KCTC 0769BP / MBEL55E).